A 198-amino-acid chain; its full sequence is Recombination protein RecR (198 aa).

The C4-type zinc finger occupies 57 to 72 (CSICGNLTDDDPCHIC). One can recognise a Toprim domain in the interval 80–175 (ETILVVEASK…KVTRLARGLA (96 aa)).

It belongs to the RecR family.

Its function is as follows. May play a role in DNA repair. It seems to be involved in an RecBC-independent recombinational process of DNA repair. It may act with RecF and RecO. This is Recombination protein RecR from Streptococcus equi subsp. zooepidemicus (strain MGCS10565).